A 325-amino-acid polypeptide reads, in one-letter code: Elongation factor P--(R)-beta-lysine ligase (325 aa).

76–78 serves as a coordination point for substrate; the sequence is SPE. ATP-binding positions include 100 to 102 and N109; that span reads RNE. Y118 contributes to the substrate binding site. 244-245 serves as a coordination point for ATP; sequence EL. E251 lines the substrate pocket. G300 lines the ATP pocket.

Belongs to the class-II aminoacyl-tRNA synthetase family. EpmA subfamily. In terms of assembly, homodimer.

It carries out the reaction D-beta-lysine + L-lysyl-[protein] + ATP = N(6)-((3R)-3,6-diaminohexanoyl)-L-lysyl-[protein] + AMP + diphosphate + H(+). Its function is as follows. With EpmB is involved in the beta-lysylation step of the post-translational modification of translation elongation factor P (EF-P). Catalyzes the ATP-dependent activation of (R)-beta-lysine produced by EpmB, forming a lysyl-adenylate, from which the beta-lysyl moiety is then transferred to the epsilon-amino group of a conserved specific lysine residue in EF-P. This chain is Elongation factor P--(R)-beta-lysine ligase, found in Yersinia pseudotuberculosis serotype O:1b (strain IP 31758).